Here is a 477-residue protein sequence, read N- to C-terminus: Glutamate--tRNA ligase 1 (477 aa).

Residues Pro12–Asn22 carry the 'HIGH' region motif. The 'KMSKS' region signature appears at Pro253–Arg257. Lys256 contributes to the ATP binding site.

Belongs to the class-I aminoacyl-tRNA synthetase family. Glutamate--tRNA ligase type 1 subfamily. In terms of assembly, monomer.

The protein localises to the cytoplasm. It carries out the reaction tRNA(Glu) + L-glutamate + ATP = L-glutamyl-tRNA(Glu) + AMP + diphosphate. In terms of biological role, catalyzes the attachment of glutamate to tRNA(Glu) in a two-step reaction: glutamate is first activated by ATP to form Glu-AMP and then transferred to the acceptor end of tRNA(Glu). The chain is Glutamate--tRNA ligase 1 from Halorhodospira halophila (strain DSM 244 / SL1) (Ectothiorhodospira halophila (strain DSM 244 / SL1)).